The chain runs to 482 residues: tRNA sulfurtransferase (482 aa).

In terms of domain architecture, THUMP spans 61–165; the sequence is LTIRDALTRI…DDRLLLIKGR (105 aa). Residues 183–184, K265, G287, and Q296 each bind ATP; that span reads LI. C344 and C456 form a disulfide bridge. In terms of domain architecture, Rhodanese spans 404–482; the sequence is FGPNDVILDI…GFKNVKVYRP (79 aa). C456 (cysteine persulfide intermediate) is an active-site residue.

The protein belongs to the ThiI family. Interacts with IscS.

The protein localises to the cytoplasm. It carries out the reaction [ThiI sulfur-carrier protein]-S-sulfanyl-L-cysteine + a uridine in tRNA + 2 reduced [2Fe-2S]-[ferredoxin] + ATP + H(+) = [ThiI sulfur-carrier protein]-L-cysteine + a 4-thiouridine in tRNA + 2 oxidized [2Fe-2S]-[ferredoxin] + AMP + diphosphate. The enzyme catalyses [ThiS sulfur-carrier protein]-C-terminal Gly-Gly-AMP + S-sulfanyl-L-cysteinyl-[cysteine desulfurase] + AH2 = [ThiS sulfur-carrier protein]-C-terminal-Gly-aminoethanethioate + L-cysteinyl-[cysteine desulfurase] + A + AMP + 2 H(+). It participates in cofactor biosynthesis; thiamine diphosphate biosynthesis. Its function is as follows. Catalyzes the ATP-dependent transfer of a sulfur to tRNA to produce 4-thiouridine in position 8 of tRNAs, which functions as a near-UV photosensor. Also catalyzes the transfer of sulfur to the sulfur carrier protein ThiS, forming ThiS-thiocarboxylate. This is a step in the synthesis of thiazole, in the thiamine biosynthesis pathway. The sulfur is donated as persulfide by IscS. In Escherichia coli O157:H7, this protein is tRNA sulfurtransferase.